Reading from the N-terminus, the 295-residue chain is Small ribosomal subunit protein mS23 (295 aa).

The disordered stretch occupies residues 249–295; that stretch reads IGSVVEEEKSQSSLFEDLLSNDNLQSEPEVEQSGQQQQQEQPKQETN. Positions 273–289 are enriched in low complexity; that stretch reads QSEPEVEQSGQQQQQEQ.

This sequence belongs to the mitochondrion-specific ribosomal protein mS23 family. As to quaternary structure, component of the mitochondrial small ribosomal subunit (mt-SSU).

It is found in the mitochondrion. In terms of biological role, component of the mitochondrial ribosome (mitoribosome), a dedicated translation machinery responsible for the synthesis of mitochondrial genome-encoded proteins, including at least some of the essential transmembrane subunits of the mitochondrial respiratory chain. The mitoribosomes are attached to the mitochondrial inner membrane and translation products are cotranslationally integrated into the membrane. This chain is Small ribosomal subunit protein mS23 (RSM25), found in Candida albicans (strain SC5314 / ATCC MYA-2876) (Yeast).